The chain runs to 231 residues: MPKRSKRYLEARKLVDRTKAYTIDEAIELLKQMPSAKFDESIELHIKTGIEPSKSDQQVRGTISLPHGTGKNVKVLVFTRGEKVEEAKAAGADFVGSDELIQQIQKGWTDFDVAIATPDMMREIGRLGRILGPRGLMPSPKAGTVTTDVAEAVKAFKAGRVEIKNDKTGNLHFPIGKKSFDSEKLKENLVSALEQISKMKPAAAKGRFIVKVVVAPTMGPGIKLDHQKVVE.

This sequence belongs to the universal ribosomal protein uL1 family. In terms of assembly, part of the 50S ribosomal subunit.

Functionally, binds directly to 23S rRNA. The L1 stalk is quite mobile in the ribosome, and is involved in E site tRNA release. Protein L1 is also a translational repressor protein, it controls the translation of the L11 operon by binding to its mRNA. In Kosmotoga olearia (strain ATCC BAA-1733 / DSM 21960 / TBF 19.5.1), this protein is Large ribosomal subunit protein uL1.